Here is a 290-residue protein sequence, read N- to C-terminus: 4-hydroxy-tetrahydrodipicolinate synthase (290 aa).

Thr-42 contributes to the pyruvate binding site. Residue Tyr-129 is the Proton donor/acceptor of the active site. The Schiff-base intermediate with substrate role is filled by Lys-157. Ile-198 is a binding site for pyruvate.

Belongs to the DapA family. In terms of assembly, homotetramer; dimer of dimers.

It localises to the cytoplasm. It carries out the reaction L-aspartate 4-semialdehyde + pyruvate = (2S,4S)-4-hydroxy-2,3,4,5-tetrahydrodipicolinate + H2O + H(+). Its pathway is amino-acid biosynthesis; L-lysine biosynthesis via DAP pathway; (S)-tetrahydrodipicolinate from L-aspartate: step 3/4. In terms of biological role, catalyzes the condensation of (S)-aspartate-beta-semialdehyde [(S)-ASA] and pyruvate to 4-hydroxy-tetrahydrodipicolinate (HTPA). The protein is 4-hydroxy-tetrahydrodipicolinate synthase of Chlamydia felis (strain Fe/C-56) (Chlamydophila felis).